The sequence spans 114 residues: Pole-localizer protein TmaR (114 aa).

Residues 70–111 (RDDYESRVDDYTIRNAELSKQRREASTKMKEQKKAHAELLKN) adopt a coiled-coil conformation. The segment at 89–114 (KQRREASTKMKEQKKAHAELLKNAEK) is disordered.

It belongs to the pole-localizer TmaR family.

The protein localises to the cytoplasm. Its function is as follows. Pole-localizer protein involved in the regulation of several cellular processes. The chain is Pole-localizer protein TmaR from Haemophilus influenzae (strain 86-028NP).